Consider the following 694-residue polypeptide: Polyribonucleotide nucleotidyltransferase (694 aa).

Mg(2+)-binding residues include aspartate 485 and aspartate 491. The 60-residue stretch at proline 552 to isoleucine 611 folds into the KH domain. The S1 motif domain maps to glycine 621–lysine 689.

Belongs to the polyribonucleotide nucleotidyltransferase family. Mg(2+) is required as a cofactor.

It localises to the cytoplasm. It carries out the reaction RNA(n+1) + phosphate = RNA(n) + a ribonucleoside 5'-diphosphate. Involved in mRNA degradation. Catalyzes the phosphorolysis of single-stranded polyribonucleotides processively in the 3'- to 5'-direction. This chain is Polyribonucleotide nucleotidyltransferase, found in Chlamydia abortus (strain DSM 27085 / S26/3) (Chlamydophila abortus).